Consider the following 170-residue polypeptide: Ribosome maturation factor RimM (170 aa).

In terms of domain architecture, PRC barrel spans 97 to 170 (KPDEYYWVDL…LVVVDWDPEF (74 aa)).

Belongs to the RimM family. Binds ribosomal protein uS19.

The protein resides in the cytoplasm. Functionally, an accessory protein needed during the final step in the assembly of 30S ribosomal subunit, possibly for assembly of the head region. Essential for efficient processing of 16S rRNA. May be needed both before and after RbfA during the maturation of 16S rRNA. It has affinity for free ribosomal 30S subunits but not for 70S ribosomes. The polypeptide is Ribosome maturation factor RimM (Stenotrophomonas maltophilia (strain K279a)).